The chain runs to 1128 residues: Probable serine/threonine-protein kinase DDB_G0283337 (1128 aa).

The segment covering 1-17 has biased composition (low complexity); that stretch reads MENNNNNNINKTNTPNN. 5 disordered regions span residues 1–21, 60–100, 131–151, 236–256, and 375–504; these read MENNNNNNINKTNTPNNSFSP, INHN…NNNN, RESNSNNNSNNSNININNNSN, NNSKEDCNSSNNSYDNDSNSN, and NDNE…NSEQ. 2 stretches are compositionally biased toward low complexity: residues 243–256 and 375–502; these read NSSNNSYDNDSNSN and NDNE…NNNS. In terms of domain architecture, Protein kinase spans 777–1054; that stretch reads LSDFSIIGEG…EIQKCKEEYE (278 aa). Residues 783–791 and lysine 809 contribute to the ATP site; that span reads IGEGGFSTV. Aspartate 904 serves as the catalytic Proton acceptor.

This sequence belongs to the protein kinase superfamily. Ser/Thr protein kinase family.

It catalyses the reaction L-seryl-[protein] + ATP = O-phospho-L-seryl-[protein] + ADP + H(+). The catalysed reaction is L-threonyl-[protein] + ATP = O-phospho-L-threonyl-[protein] + ADP + H(+). The protein is Probable serine/threonine-protein kinase DDB_G0283337 of Dictyostelium discoideum (Social amoeba).